The chain runs to 200 residues: Small ribosomal subunit protein uS4 (200 aa).

Residues 91 to 150 (TRLDNVVYRLGITPTRRSARQLVSHKHITVNGKIVNIPSYALKVGDIIGLTEKTKSSNAI) form the S4 RNA-binding domain.

Belongs to the universal ribosomal protein uS4 family. Part of the 30S ribosomal subunit. Contacts protein S5. The interaction surface between S4 and S5 is involved in control of translational fidelity.

One of the primary rRNA binding proteins, it binds directly to 16S rRNA where it nucleates assembly of the body of the 30S subunit. Its function is as follows. With S5 and S12 plays an important role in translational accuracy. This is Small ribosomal subunit protein uS4 from Amoebophilus asiaticus (strain 5a2).